Here is a 292-residue protein sequence, read N- to C-terminus: Large ribosomal subunit protein mL67 (292 aa).

Residues 59-83 are disordered; it reads VELKSPSRLQLKSEPGNKGNPKGHG.

The protein belongs to the mitochondrion-specific ribosomal protein mL67 family. Component of the mitochondrial large ribosomal subunit (mt-LSU). Mature N.crassa 74S mitochondrial ribosomes consist of a small (37S) and a large (54S) subunit. The 37S small subunit contains a 16S ribosomal RNA (16S mt-rRNA) and 32 different proteins. The 54S large subunit contains a 23S rRNA (23S mt-rRNA) and 42 different proteins.

It localises to the mitochondrion. In terms of biological role, component of the mitochondrial ribosome (mitoribosome), a dedicated translation machinery responsible for the synthesis of mitochondrial genome-encoded proteins, including at least some of the essential transmembrane subunits of the mitochondrial respiratory chain. The mitoribosomes are attached to the mitochondrial inner membrane and translation products are cotranslationally integrated into the membrane. mL67/MHR1 also has extraribosomal functions, being involved in regulation of mitochondrial DNA recombination, maintenance and repair, and generation of homoplasmic cells. mL67/MHR1 also acts as a transcription factor involved in regulation of RNA polymerase II-dependent transcription. This Neurospora crassa (strain ATCC 24698 / 74-OR23-1A / CBS 708.71 / DSM 1257 / FGSC 987) protein is Large ribosomal subunit protein mL67 (mhr1).